A 646-amino-acid chain; its full sequence is P-selectin (646 aa).

The N-terminal stretch at 1–41 (MASCPKAIWNWRFQRAVFRTVQLLCFSVLIFEVINQKEVSA) is a signal peptide. Topologically, residues 42-587 (WTYHYSNKTY…QAGPLTIQET (546 aa)) are extracellular. Asn-48, Asn-54, and Asn-80 each carry an N-linked (GlcNAc...) asparagine glycan. A C-type lectin domain is found at 58 to 158 (AFCQKYYTDL…PCWKRKRALC (101 aa)). 17 cysteine pairs are disulfide-bonded: Cys-60–Cys-158, Cys-131–Cys-150, Cys-163–Cys-174, Cys-168–Cys-183, Cys-185–Cys-194, Cys-200–Cys-244, Cys-230–Cys-257, Cys-262–Cys-306, Cys-292–Cys-319, Cys-324–Cys-368, Cys-354–Cys-381, Cys-386–Cys-430, Cys-416–Cys-443, Cys-458–Cys-502, Cys-488–Cys-515, Cys-520–Cys-564, and Cys-550–Cys-577. Ca(2+) contacts are provided by Glu-121, Asn-123, and Asn-124. Residue Asn-123 coordinates a carbohydrate. The a carbohydrate site is built by Glu-133 and Asn-146. Asn-146 and Asp-147 together coordinate Ca(2+). The region spanning 159-195 (YRASCQDMSCSKQGECIETIGNYTCSCYPGFYGPECE) is the EGF-like domain. Asn-180 carries N-linked (GlcNAc...) asparagine glycosylation. Sushi domains are found at residues 198 to 259 (RECG…QCVA), 260 to 321 (VQCP…VCKA), 322 to 383 (LQCQ…ECQA), 384 to 445 (VTCA…TCEE), 456 to 517 (VQCP…TCRA), and 518 to 579 (VKCA…TCQA). Asn-212 and Asn-219 each carry an N-linked (GlcNAc...) asparagine glycan. Asn-336 carries an N-linked (GlcNAc...) asparagine glycan. A glycan (N-linked (GlcNAc...) asparagine) is linked at Asn-481. Asn-532, Asn-539, and Asn-557 each carry an N-linked (GlcNAc...) asparagine glycan. The helical transmembrane segment at 588-611 (LTYVGGAAAGTTGLVTGSILLALL) threads the bilayer. The Cytoplasmic segment spans residues 612-646 (RRRCRQKDDGKSPLNPQSHLGTYGVFTNAAFDPSP). Residues 634-637 (YGVF) carry the Endocytosis signal motif. The interval 637 to 646 (FTNAAFDPSP) is interaction with SNX17.

This sequence belongs to the selectin/LECAM family. As to quaternary structure, interacts with SNX17. Interacts with SELPLG/PSGL1 and PODXL2 and mediates neutrophil adhesion and leukocyte rolling. This interaction requires the sialyl-Lewis X epitope of SELPLG and PODXL2, and specific tyrosine sulfation on SELPLG. Interacts (via C-type lectin domain) with alpha-IIb/beta3 integrin ITGA2B:ITGB3 and alpha-V/beta-3 integrin ITGAV:ITGB3. Interacts with alpha5/beta1 integrin ITGA5:ITGB1 and alpha4/beta1 integrin ITGA4:ITGB. As to expression, stored in the alpha-granules of platelets and Weibel-Palade bodies of endothelial cells. Upon cell activation by agonists, P-selectin is transported rapidly to the cell surface.

The protein resides in the cell membrane. Its function is as follows. Ca(2+)-dependent receptor for myeloid cells that binds to carbohydrates on neutrophils and monocytes. Mediates the interaction of activated endothelial cells or platelets with leukocytes. The ligand recognized is sialyl-Lewis X. Mediates rapid rolling of leukocyte rolling over vascular surfaces during the initial steps in inflammation through interaction with SELPLG. Mediates cell-cell interactions and cell adhesion via the interaction with integrin alpha-IIb/beta3 (ITGA2B:ITGB3) and integrin alpha-V/beta-3 (ITGAV:ITGB3). This Bos taurus (Bovine) protein is P-selectin (SELP).